Reading from the N-terminus, the 379-residue chain is UDP-4-amino-4-deoxy-L-arabinose--oxoglutarate aminotransferase (379 aa).

Lys182 carries the post-translational modification N6-(pyridoxal phosphate)lysine.

This sequence belongs to the DegT/DnrJ/EryC1 family. ArnB subfamily. Homodimer. Pyridoxal 5'-phosphate serves as cofactor.

The enzyme catalyses UDP-4-amino-4-deoxy-beta-L-arabinose + 2-oxoglutarate = UDP-beta-L-threo-pentopyranos-4-ulose + L-glutamate. It participates in nucleotide-sugar biosynthesis; UDP-4-deoxy-4-formamido-beta-L-arabinose biosynthesis; UDP-4-deoxy-4-formamido-beta-L-arabinose from UDP-alpha-D-glucuronate: step 2/3. It functions in the pathway bacterial outer membrane biogenesis; lipopolysaccharide biosynthesis. Functionally, catalyzes the conversion of UDP-4-keto-arabinose (UDP-Ara4O) to UDP-4-amino-4-deoxy-L-arabinose (UDP-L-Ara4N). The modified arabinose is attached to lipid A and is required for resistance to polymyxin and cationic antimicrobial peptides. The chain is UDP-4-amino-4-deoxy-L-arabinose--oxoglutarate aminotransferase from Escherichia coli O7:K1 (strain IAI39 / ExPEC).